The sequence spans 317 residues: Melanocyte-stimulating hormone receptor (317 aa).

The Extracellular segment spans residues 1 to 37 (MPALGSQRRLLGSLNCTPPATLPFTLAPNRTGPQCLE). N-linked (GlcNAc...) asparagine glycosylation occurs at N29. Residues 38–63 (VSIPDGLFLSLGLVSLVENVLVVAAI) traverse the membrane as a helical segment. Topologically, residues 64-72 (AKNRNLHSP) are cytoplasmic. Residues 73-93 (MYYFICCLAVSDLLVSVSNVL) traverse the membrane as a helical segment. At 94–118 (ETAVMLLLEAGVLATQAAVVQQLDN) the chain is on the extracellular side. A helical membrane pass occupies residues 119–140 (VIDVLICGSMVSSLCFLGAIAV). Residues 141 to 163 (DRYISIFYALRYHSVVTLPRAWR) are Cytoplasmic-facing. Residues 164–183 (IIAAIWVASILTSLLFITYY) form a helical membrane-spanning segment. Over 184–191 (NHKVILLC) the chain is Extracellular. A helical transmembrane segment spans residues 192 to 211 (LVGLFIAMLALMAVLYVHML). Over 212 to 240 (ARACQHARGIARLQKRQRPIHQGFGLKGA) the chain is Cytoplasmic. A helical membrane pass occupies residues 241-266 (ATLTILLGVFFLCWGPFFLHLSLIVL). The Extracellular segment spans residues 267–279 (CPQHPTCGCIFKN). Residues 280–300 (FNLFLALIICNAIVDPLIYAF) form a helical membrane-spanning segment. The Cytoplasmic portion of the chain corresponds to 301-317 (RSQELRKTLQEVLQCSW). The S-palmitoyl cysteine moiety is linked to residue C315.

This sequence belongs to the G-protein coupled receptor 1 family. In terms of assembly, interacts with MGRN1, but does not undergo MGRN1-mediated ubiquitination; this interaction competes with GNAS-binding and thus inhibits agonist-induced cAMP production. Interacts with OPN3; the interaction results in a decrease in MC1R-mediated cAMP signaling and ultimately a decrease in melanin production in melanocytes. Highly expressed in the testis.

The protein localises to the cell membrane. Its function is as follows. Receptor for MSH (alpha, beta) and ACTH. Does not seem to be active with gamma-MSH. The activity of this receptor is mediated by G proteins which activate adenylate cyclase. Mediates melanogenesis, the production of eumelanin (black/brown) and phaeomelanin (red/yellow), via regulation of cAMP signaling in melanocytes. The polypeptide is Melanocyte-stimulating hormone receptor (MC1R) (Bos taurus (Bovine)).